The chain runs to 251 residues: Uroporphyrinogen-III C-methyltransferase (251 aa).

S-adenosyl-L-homocysteine-binding positions include P17, 93–95 (GGD), 123–124 (TS), M177, and A206.

This sequence belongs to the precorrin methyltransferase family.

The protein localises to the plastid. The protein resides in the chloroplast. It catalyses the reaction uroporphyrinogen III + 2 S-adenosyl-L-methionine = precorrin-2 + 2 S-adenosyl-L-homocysteine + H(+). It participates in cofactor biosynthesis; adenosylcobalamin biosynthesis; precorrin-2 from uroporphyrinogen III: step 1/1. The protein operates within porphyrin-containing compound metabolism; siroheme biosynthesis; precorrin-2 from uroporphyrinogen III: step 1/1. In terms of biological role, catalyzes the two successive C-2 and C-7 methylation reactions involved in the conversion of uroporphyrinogen III to precorrin-2 via the intermediate formation of precorrin-1. It is a step in the biosynthesis of both cobalamin (vitamin B12) and siroheme. The protein is Uroporphyrinogen-III C-methyltransferase (cobA) of Cyanidium caldarium (Red alga).